The following is a 195-amino-acid chain: 4'-phosphopantetheinyl transferase AcpT (195 aa).

The protein belongs to the P-Pant transferase superfamily. Gsp/Sfp/HetI/AcpT family.

The catalysed reaction is apo-[ACP] + CoA = holo-[ACP] + adenosine 3',5'-bisphosphate + H(+). In terms of biological role, may be involved in an alternative pathway for phosphopantetheinyl transfer and holo-ACP synthesis in E.coli. The native apo-protein substrate is unknown. Is able to functionally replace AcpS in vivo but only when expressed at high levels. The polypeptide is 4'-phosphopantetheinyl transferase AcpT (Escherichia coli (strain K12)).